A 459-amino-acid chain; its full sequence is Fe(3+)-Zn(2+) purple acid phosphatase (459 aa).

The signal sequence occupies residues 1–22 (MGVVKGLLALALVLNVVVVSNG). A Blocked amino end (Gly) modification is found at Gly-23. Asn-108 carries N-linked (GlcNAc...) asparagine; partial glycosylation. A glycan (N-linked (GlcNAc...) asparagine) is linked at Asn-136. Asp-162 is a Fe cation binding site. Asn-170 carries N-linked (GlcNAc...) asparagine glycosylation. Asp-191 and Tyr-194 together coordinate Fe cation. Asp-191 is a binding site for Zn(2+). Zn(2+) is bound at residue Asn-228. Asn-238 carries an N-linked (GlcNAc...) asparagine glycan. His-313 serves as a coordination point for Zn(2+). Catalysis depends on His-323, which acts as the Proton donor. Zn(2+) is bound at residue His-350. Residue His-352 participates in Fe cation binding. The N-linked (GlcNAc...) asparagine glycan is linked to Asn-423.

Belongs to the metallophosphoesterase superfamily. Purple acid phosphatase family. Homodimer; disulfide-linked. Fe cation serves as cofactor. It depends on Zn(2+) as a cofactor.

The protein localises to the secreted. The catalysed reaction is a phosphate monoester + H2O = an alcohol + phosphate. With respect to regulation, inhibited by compounds CC24201, CC27209, and MO07123. Inhibited by the tetraoxoanions molybdate and phosphate. Not inhibited by EDTA or tartrate. In Phaseolus vulgaris (Kidney bean), this protein is Fe(3+)-Zn(2+) purple acid phosphatase.